Here is a 145-residue protein sequence, read N- to C-terminus: D-aminoacyl-tRNA deacylase (145 aa).

The short motif at 137–138 (GP) is the Gly-cisPro motif, important for rejection of L-amino acids element.

This sequence belongs to the DTD family. Homodimer.

The protein resides in the cytoplasm. The enzyme catalyses glycyl-tRNA(Ala) + H2O = tRNA(Ala) + glycine + H(+). The catalysed reaction is a D-aminoacyl-tRNA + H2O = a tRNA + a D-alpha-amino acid + H(+). Functionally, an aminoacyl-tRNA editing enzyme that deacylates mischarged D-aminoacyl-tRNAs. Also deacylates mischarged glycyl-tRNA(Ala), protecting cells against glycine mischarging by AlaRS. Acts via tRNA-based rather than protein-based catalysis; rejects L-amino acids rather than detecting D-amino acids in the active site. By recycling D-aminoacyl-tRNA to D-amino acids and free tRNA molecules, this enzyme counteracts the toxicity associated with the formation of D-aminoacyl-tRNA entities in vivo and helps enforce protein L-homochirality. In Lactobacillus delbrueckii subsp. bulgaricus (strain ATCC BAA-365 / Lb-18), this protein is D-aminoacyl-tRNA deacylase.